Consider the following 91-residue polypeptide: Small ribosomal subunit protein uS19 (91 aa).

Belongs to the universal ribosomal protein uS19 family.

Protein S19 forms a complex with S13 that binds strongly to the 16S ribosomal RNA. This Prochlorococcus marinus (strain MIT 9515) protein is Small ribosomal subunit protein uS19.